A 1192-amino-acid chain; its full sequence is Probable ATP-dependent RNA helicase kurz (1192 aa).

The disordered stretch occupies residues 170-214 (ELQAKRKNPNVISVEEDDEDSSSSDEDDEEAPAQSAPIAIPTPVS). A compositionally biased stretch (acidic residues) spans 183–200 (VEEDDEDSSSSDEDDEEA). In terms of domain architecture, Helicase ATP-binding spans 270 to 436 (METINENPIV…TRLFKIPPPL (167 aa)). 283–290 (GETGSGKT) contacts ATP. Residues 379-382 (DEAH) carry the DEAH box motif. The tract at residues 504 to 529 (APTKDVAKNGKVSEEEKEETIDDAAS) is disordered. Residues 505–517 (PTKDVAKNGKVSE) show a composition bias toward basic and acidic residues. Ser529 carries the phosphoserine modification. The residue at position 530 (Thr530) is a Phosphothreonine. Residues 540 to 746 (DMKRVIRNIR…DLMLQMRCMG (207 aa)) enclose the Helicase C-terminal domain. Residues 567 to 583 (DDYKLPGDDTEADMHEQ) are compositionally biased toward basic and acidic residues. The interval 567–612 (DDYKLPGDDTEADMHEQPDEDDEQEGLEEDNDDELGLEDESGMGSG) is disordered. The span at 584-607 (PDEDDEQEGLEEDNDDELGLEDES) shows a compositional bias: acidic residues.

It belongs to the DEAD box helicase family. DEAH subfamily.

It catalyses the reaction ATP + H2O = ADP + phosphate + H(+). The sequence is that of Probable ATP-dependent RNA helicase kurz (kz) from Drosophila melanogaster (Fruit fly).